The sequence spans 286 residues: Pheromone receptor transcription factor (286 aa).

S2 carries the N-acetylserine modification. The residue at position 2 (S2) is a Phosphoserine. In terms of domain architecture, MADS-box spans 18–72 (RRKIEIKFIENKTRRHVTFSKRKHGIMKKAFELSVLTGTQVLLLVVSETGLVYTF). Acidic residues predominate over residues 97–119 (PDDEEEDEEEDGDDDDDDDDDGN). The disordered stretch occupies residues 97–137 (PDDEEEDEEEDGDDDDDDDDDGNDMQRQQPQQQQPQQQQQV). Over residues 122–136 (QRQQPQQQQPQQQQQ) the composition is skewed to low complexity. S144 carries the post-translational modification Phosphoserine. The disordered stretch occupies residues 167-264 (LGGANPNQNS…QQAFANAASP (98 aa)). The span at 171-246 (NPNQNSMIQQ…QQQQQQQQQP (76 aa)) shows a compositional bias: low complexity.

In terms of assembly, homodimer. Binds DNA with a high specificity in complex with mating-type protein ALPHA1. Also binds DNA with a high specificity as a heterotetramer consisting of an ALPHA2 dimer and an MCM1 dimer. Interacts with YHP1 and YOX1, possibly leading to its inactivation. Interacts with ARG80 and ARG82.

It is found in the nucleus. Functionally, transcription factor required for the efficient replication of minichromosomes and the transcriptional regulation of early cell cycle genes. Activates transcription of ECB-dependent genes during the G1/M phase. Genes that contain a ECB (early cell box) element in their transcription regulatory region are transcribed only during G1/M phases. Interacts with the alpha-2 repressor or with the alpha-1 activator thereby regulating the expression of mating-type-specific genes. With ARG80, ARG81 and ARG82, coordinates the expression of arginine anabolic and catabolic genes in response to arginine. The chain is Pheromone receptor transcription factor (MCM1) from Saccharomyces cerevisiae (strain ATCC 204508 / S288c) (Baker's yeast).